Reading from the N-terminus, the 179-residue chain is Hypoxanthine-guanine phosphoribosyltransferase (179 aa).

Residues Lys-42 and Gly-43 each contribute to the diphosphate site. The Mg(2+) site is built by Glu-98 and Asp-99. Glu-102 serves as the catalytic Proton acceptor. Residues Lys-130, 151–152, and Asp-158 contribute to the GMP site; that span reads FV. Arg-164 provides a ligand contact to diphosphate.

The protein belongs to the purine/pyrimidine phosphoribosyltransferase family. Requires Mg(2+) as cofactor.

It is found in the cytoplasm. It carries out the reaction IMP + diphosphate = hypoxanthine + 5-phospho-alpha-D-ribose 1-diphosphate. The catalysed reaction is GMP + diphosphate = guanine + 5-phospho-alpha-D-ribose 1-diphosphate. It functions in the pathway purine metabolism; IMP biosynthesis via salvage pathway; IMP from hypoxanthine: step 1/1. It participates in purine metabolism; GMP biosynthesis via salvage pathway; GMP from guanine: step 1/1. In terms of biological role, purine salvage pathway enzyme that catalyzes the transfer of the ribosyl-5-phosphate group from 5-phospho-alpha-D-ribose 1-diphosphate (PRPP) to the N9 position of the 6-oxopurines hypoxanthine and guanine to form the corresponding ribonucleotides IMP (inosine 5'-monophosphate) and GMP (guanosine 5'-monophosphate), with the release of PPi. This chain is Hypoxanthine-guanine phosphoribosyltransferase (hpt), found in Staphylococcus aureus (strain COL).